We begin with the raw amino-acid sequence, 156 residues long: Ribonuclease pancreatic (156 aa).

The first 28 residues, 1-28 (MALEKSLVLLPLLVLILLVLGWVQPSLG), serve as a signal peptide directing secretion. Lys-35 and Arg-38 together coordinate substrate. His-40 serves as the catalytic Proton acceptor. N-linked (GlcNAc...) asparagine glycans are attached at residues Asn-50 and Asn-62. 4 disulfides stabilise this stretch: Cys-54–Cys-112, Cys-68–Cys-123, Cys-86–Cys-138, and Cys-93–Cys-100. Substrate is bound by residues 69–73 (KPVNT) and Lys-94. N-linked (GlcNAc...) asparagine glycosylation is present at Asn-104. Arg-113 lines the substrate pocket. Residue His-147 is the Proton donor of the active site.

This sequence belongs to the pancreatic ribonuclease family. In terms of assembly, monomer. Interacts with and forms tight 1:1 complexes with RNH1. Dimerization of two such complexes may occur. Interaction with RNH1 inhibits this protein. In terms of tissue distribution, pancreas and other tissues and body fluids (indicating it may have other physiological functions besides its role in digestion).

Its subcellular location is the secreted. The catalysed reaction is an [RNA] containing cytidine + H2O = an [RNA]-3'-cytidine-3'-phosphate + a 5'-hydroxy-ribonucleotide-3'-[RNA].. It catalyses the reaction an [RNA] containing uridine + H2O = an [RNA]-3'-uridine-3'-phosphate + a 5'-hydroxy-ribonucleotide-3'-[RNA].. Its function is as follows. Endonuclease that catalyzes the cleavage of RNA on the 3' side of pyrimidine nucleotides. Acts on single-stranded and double-stranded RNA. The protein is Ribonuclease pancreatic (RNASE1) of Pongo pygmaeus (Bornean orangutan).